Here is a 332-residue protein sequence, read N- to C-terminus: Glycerol-3-phosphate dehydrogenase [NAD(P)+] (332 aa).

S15, W16, and K110 together coordinate NADPH. The sn-glycerol 3-phosphate site is built by K110, G137, and S139. Residue A141 participates in NADPH binding. 5 residues coordinate sn-glycerol 3-phosphate: K192, D245, S255, R256, and N257. Catalysis depends on K192, which acts as the Proton acceptor. R256 provides a ligand contact to NADPH. E282 serves as a coordination point for NADPH.

The protein belongs to the NAD-dependent glycerol-3-phosphate dehydrogenase family.

It localises to the cytoplasm. It catalyses the reaction sn-glycerol 3-phosphate + NAD(+) = dihydroxyacetone phosphate + NADH + H(+). The enzyme catalyses sn-glycerol 3-phosphate + NADP(+) = dihydroxyacetone phosphate + NADPH + H(+). Its pathway is membrane lipid metabolism; glycerophospholipid metabolism. Catalyzes the reduction of the glycolytic intermediate dihydroxyacetone phosphate (DHAP) to sn-glycerol 3-phosphate (G3P), the key precursor for phospholipid synthesis. The polypeptide is Glycerol-3-phosphate dehydrogenase [NAD(P)+] (Coxiella burnetii (strain CbuK_Q154) (Coxiella burnetii (strain Q154))).